Here is a 69-residue protein sequence, read N- to C-terminus: Parvalbumin beta 3 (69 aa).

Ala1 carries the N-acetylalanine modification. The 36-residue stretch at 24–59 (FNYKTFFKFFAIIDQDHSGFIEEEELKLFLQTFSAG) folds into the EF-hand domain. Positions 37, 39, 41, 43, 45, and 48 each coordinate Ca(2+).

It belongs to the parvalbumin family.

Its function is as follows. In muscle, parvalbumin is thought to be involved in relaxation after contraction. It binds two calcium ions. The sequence is that of Parvalbumin beta 3 from Merluccius polli (Benguela hake).